The primary structure comprises 66 residues: Large ribosomal subunit protein uL29 (66 aa).

This sequence belongs to the universal ribosomal protein uL29 family.

This chain is Large ribosomal subunit protein uL29, found in Borrelia turicatae (strain 91E135).